Here is a 184-residue protein sequence, read N- to C-terminus: ATP synthase subunit b, chloroplastic (184 aa).

Residues 27 to 49 (LATNLINLSVVLGVLIFFGKGVL) traverse the membrane as a helical segment.

This sequence belongs to the ATPase B chain family. As to quaternary structure, F-type ATPases have 2 components, F(1) - the catalytic core - and F(0) - the membrane proton channel. F(1) has five subunits: alpha(3), beta(3), gamma(1), delta(1), epsilon(1). F(0) has four main subunits: a(1), b(1), b'(1) and c(10-14). The alpha and beta chains form an alternating ring which encloses part of the gamma chain. F(1) is attached to F(0) by a central stalk formed by the gamma and epsilon chains, while a peripheral stalk is formed by the delta, b and b' chains.

It is found in the plastid. The protein localises to the chloroplast thylakoid membrane. Functionally, f(1)F(0) ATP synthase produces ATP from ADP in the presence of a proton or sodium gradient. F-type ATPases consist of two structural domains, F(1) containing the extramembraneous catalytic core and F(0) containing the membrane proton channel, linked together by a central stalk and a peripheral stalk. During catalysis, ATP synthesis in the catalytic domain of F(1) is coupled via a rotary mechanism of the central stalk subunits to proton translocation. Its function is as follows. Component of the F(0) channel, it forms part of the peripheral stalk, linking F(1) to F(0). This Guizotia abyssinica (Niger) protein is ATP synthase subunit b, chloroplastic.